Reading from the N-terminus, the 496-residue chain is Maturase K (496 aa).

This sequence belongs to the intron maturase 2 family. MatK subfamily.

It is found in the plastid. The protein localises to the chloroplast. Functionally, usually encoded in the trnK tRNA gene intron. Probably assists in splicing its own and other chloroplast group II introns. The chain is Maturase K from Paeonia peregrina (Common peony).